The sequence spans 132 residues: Putative F-box protein At4g05620 (132 aa).

An F-box domain is found at 17–63; sequence QKKSLSLPHDVLVSCLAHVSRLHYSILSLVLKNFRSLIASPELYKTR.

The polypeptide is Putative F-box protein At4g05620 (Arabidopsis thaliana (Mouse-ear cress)).